We begin with the raw amino-acid sequence, 2363 residues long: Highly reducing polyketide synthase cnsI (2363 aa).

One can recognise a Ketosynthase family 3 (KS3) domain in the interval 14–440 (PEPIAIIGMS…GSNAHAIVES (427 aa)). Residues Cys187, His322, and His363 each act as for beta-ketoacyl synthase activity in the active site. Residues 546–854 (LAFVFTGQGA…FLQVLKSINA (309 aa)) form a malonyl-CoA:ACP transacylase (MAT) domain region. The active-site For malonyltransferase activity is the Ser638. Residues 938–1068 (HDLLGSPMDF…GTFTLHYDAR (131 aa)) are N-terminal hotdog fold. Residues 938-1224 (HDLLGSPMDF…RLDSIASDVS (287 aa)) form a dehydratase (DH) domain region. Residues 938–1246 (HDLLGSPMDF…LGPVPMSKVP (309 aa)) enclose the PKS/mFAS DH domain. His970 serves as the catalytic Proton acceptor; for dehydratase activity. The C-terminal hotdog fold stretch occupies residues 1089 to 1246 (TAECETNRDA…LGPVPMSKVP (158 aa)). Asp1159 (proton donor; for dehydratase activity) is an active-site residue. The enoylreductase (ER) domain stretch occupies residues 1669–1976 (GGQWVEDRQL…ARQTGISVAI (308 aa)). Residues 2001–2177 (TYLLAGGLGM…PGHSIDIGLV (177 aa)) form a catalytic ketoreductase (KRc) domain region. The Carrier domain maps to 2279–2357 (EDASYVVNQA…VLSEKIAAQS (79 aa)). Residue Ser2317 is modified to O-(pantetheine 4'-phosphoryl)serine.

The protein operates within alkaloid biosynthesis. Highly reducing polyketide synthase; part of the gene cluster that mediates the biosynthesis of communesins, a prominent class of indole alkaloids with great potential as pharmaceuticals. Communesins are biosynthesized by the coupling of tryptamine and aurantioclavine, two building blocks derived from L-tryptophan. The L-tryptophan decarboxylase cnsB converts L-tryptophan to tryptamine, whereas the tryptophan dimethylallyltransferase cnsF converts L-tryptophan to 4-dimethylallyl tryptophan which is further transformed to aurantioclavine by the aurantioclavine synthase cnsA, probably aided by the catalase cnsD. The cytochrome P450 monooxygenase cnsC catalyzes the heterodimeric coupling between the two different indole moieties, tryptamine and aurantioclavine, to construct vicinal quaternary stereocenters and yield the heptacyclic communesin scaffold. The O-methyltransferase cnsE then methylates the communesin scaffold to produce communesin K, the simplest characterized communesin that contains the heptacyclic core. The dioxygenase cnsJ converts communesin K into communesin I. Acylation to introduce the hexadienyl group at position N16 of communesin I by the acyltransferase cnsK leads to the production of communesin B. The hexadienyl group is produced by the highly reducing polyketide synthase cnsI, before being hydrolytically removed from cnsI by the serine hydrolase cnsH, converted into hexadienyl-CoA by the CoA ligase cnsG, and then transferred to communesin I by cnsK. Surprisingly, cnsK may also be a promiscuous acyltransferase that can tolerate a range of acyl groups, including acetyl-, propionyl-, and butyryl-CoA, which lead to communesins A, G and H respectively. The roles of the alpha-ketoglutarate-dependent dioxygenases cnsM and cnsP have still to be determined. In Penicillium expansum (Blue mold rot fungus), this protein is Highly reducing polyketide synthase cnsI.